Here is a 112-residue protein sequence, read N- to C-terminus: MAAALARLGLRPVKQVRVQFCPFEKNVESTRTFLQTVSSEKVRSTNLNCSVIADVRHDGSEPCVDVLFGDGHRLIMRGAHLTALEMLTAFASHIRARDAAGSGDKPGADTGR.

This sequence belongs to the mitochondrion-specific ribosomal protein mL53 family. As to quaternary structure, component of the mitochondrial large ribosomal subunit (mt-LSU). Mature mammalian 55S mitochondrial ribosomes consist of a small (28S) and a large (39S) subunit. The 28S small subunit contains a 12S ribosomal RNA (12S mt-rRNA) and 30 different proteins. The 39S large subunit contains a 16S rRNA (16S mt-rRNA), a copy of mitochondrial valine transfer RNA (mt-tRNA(Val)), which plays an integral structural role, and 52 different proteins. mL53 is located at the L7/L12 stalk.

The protein resides in the mitochondrion. This is Large ribosomal subunit protein mL53 (MRPL53) from Homo sapiens (Human).